Here is a 195-residue protein sequence, read N- to C-terminus: uncharacterized protein (195 aa).

This is an uncharacterized protein from Acidianus hospitalis (AFV-1).